The following is a 221-amino-acid chain: Peptide methionine sulfoxide reductase MsrA (221 aa).

Residue C54 is part of the active site.

This sequence belongs to the MsrA Met sulfoxide reductase family.

It carries out the reaction L-methionyl-[protein] + [thioredoxin]-disulfide + H2O = L-methionyl-(S)-S-oxide-[protein] + [thioredoxin]-dithiol. It catalyses the reaction [thioredoxin]-disulfide + L-methionine + H2O = L-methionine (S)-S-oxide + [thioredoxin]-dithiol. Functionally, has an important function as a repair enzyme for proteins that have been inactivated by oxidation. Catalyzes the reversible oxidation-reduction of methionine sulfoxide in proteins to methionine. In Methylobacterium sp. (strain 4-46), this protein is Peptide methionine sulfoxide reductase MsrA.